Reading from the N-terminus, the 205-residue chain is Dephospho-CoA kinase (205 aa).

In terms of domain architecture, DPCK spans 7–205 (IIGVTGRIAS…QGIINYERFE (199 aa)). 15–20 (ASGKDT) serves as a coordination point for ATP.

Belongs to the CoaE family.

The protein resides in the cytoplasm. It carries out the reaction 3'-dephospho-CoA + ATP = ADP + CoA + H(+). The protein operates within cofactor biosynthesis; coenzyme A biosynthesis; CoA from (R)-pantothenate: step 5/5. In terms of biological role, catalyzes the phosphorylation of the 3'-hydroxyl group of dephosphocoenzyme A to form coenzyme A. The protein is Dephospho-CoA kinase of Borreliella burgdorferi (strain ATCC 35210 / DSM 4680 / CIP 102532 / B31) (Borrelia burgdorferi).